The primary structure comprises 206 residues: UPF0328 protein ECU01_0050/ECU01_1560 (206 aa).

2 disordered regions span residues 1-153 (MPRP…HSHT) and 179-206 (GRLHGSPTKGAQTAQQAQPHPPKQLATL). The span at 74 to 96 (HTEGCHTHEANPEPNTKHTETES) shows a compositional bias: basic and acidic residues. Composition is skewed to polar residues over residues 97 to 120 (PKPQTSTQHHTPITIPSSLLSQNT) and 132 to 148 (SRPSTIPANTYQPQSPH).

This sequence belongs to the UPF0328 family.

This is UPF0328 protein ECU01_0050/ECU01_1560 from Encephalitozoon cuniculi (strain GB-M1) (Microsporidian parasite).